Reading from the N-terminus, the 422-residue chain is Tyrosine--tRNA ligase (422 aa).

Y35 serves as a coordination point for L-tyrosine. The short motif at 40–49 (PTAPSLHVGH) is the 'HIGH' region element. Y170 and Q174 together coordinate L-tyrosine. The short motif at 231-235 (KFGKT) is the 'KMSKS' region element. K234 serves as a coordination point for ATP. The S4 RNA-binding domain maps to 353 to 419 (APVVDLFAEV…GKKNLAAVEI (67 aa)).

Belongs to the class-I aminoacyl-tRNA synthetase family. TyrS type 1 subfamily. As to quaternary structure, homodimer.

It localises to the cytoplasm. It carries out the reaction tRNA(Tyr) + L-tyrosine + ATP = L-tyrosyl-tRNA(Tyr) + AMP + diphosphate + H(+). Functionally, catalyzes the attachment of tyrosine to tRNA(Tyr) in a two-step reaction: tyrosine is first activated by ATP to form Tyr-AMP and then transferred to the acceptor end of tRNA(Tyr). The protein is Tyrosine--tRNA ligase of Streptomyces coelicolor (strain ATCC BAA-471 / A3(2) / M145).